Reading from the N-terminus, the 584-residue chain is Extracellular serine/threonine protein kinase FAM20C (584 aa).

Topologically, residues 1 to 10 (MKMMLVRRFR) are cytoplasmic. A propeptide spanning residues 1 to 92 (MKMMLVRRFR…PNKHTLRILQ (92 aa)) is cleaved from the precursor. The helical; Signal-anchor for type II membrane protein transmembrane segment at 11-31 (VLILMVFLVACALHIALDLLP) threads the bilayer. Residues 32–584 (RLERRGARPS…DTEHRAASAR (553 aa)) are Lumenal-facing. Disordered regions lie at residues 62–81 (QVRGRPGEPPAASSAAGDAG) and 94–159 (FSSD…GDAS). 2 stretches are compositionally biased toward low complexity: residues 71–81 (PAASSAAGDAG) and 95–112 (SSDPSSNLSSHSLEKLPP). N-linked (GlcNAc...) asparagine glycosylation occurs at N101. S106 carries the phosphoserine modification. Over residues 116-149 (PAERALRGRDPGALRPHDPAHRPLLRDPGPRRSE) the composition is skewed to basic and acidic residues. ATP is bound by residues Q269, K285, and E306. E306 is a binding site for Mn(2+). N335 carries an N-linked (GlcNAc...) asparagine glycan. The interval 354–565 (FISPANNICF…AVRDCVERNG (212 aa)) is kinase domain. 2 disulfides stabilise this stretch: C362–C378 and C367–C371. 389–392 (AAFL) is an ATP binding site. 2 disulfide bridges follow: C426/C500 and C501/C560. Residue D458 is part of the active site. Residue E463 participates in ATP binding. A glycan (N-linked (GlcNAc...) asparagine) is linked at N470. D478 is a binding site for ATP. Residue D478 coordinates Mn(2+).

It belongs to the FAM20 family. As to quaternary structure, homodimer; disulfide-linked. Interacts with FAM20A; probably forming a heterotetramer of 2 subunits of FAM20A and 2 subunits of FAM20C. Interacts with protease MBTPS1/S1P; the interaction results in FAM20C cleavage and secretion. Interacts with COPII components SEC23A and SEC24A; transport of FAM20C from the endoplasmic reticulum to the Golgi is likely to be mediated by COPII vesicles. Requires Mn(2+) as cofactor. Post-translationally, N-glycosylation is required for folding. In terms of processing, autophosphorylated. Propeptide cleavage by MBTPS1/S1P promotes FAM20C secretion and maximal kinase activity which is essential for efficient osteoblast differentiation and biomineralization. Widely expressed.

It is found in the golgi apparatus membrane. The protein resides in the secreted. Its subcellular location is the endoplasmic reticulum. The enzyme catalyses L-seryl-[protein] + ATP = O-phospho-L-seryl-[protein] + ADP + H(+). It carries out the reaction L-threonyl-[protein] + ATP = O-phospho-L-threonyl-[protein] + ADP + H(+). Serine/threonine protein kinase activity is increased upon interaction with FAM20A. Functionally, golgi serine/threonine protein kinase that phosphorylates secretory pathway proteins within Ser-x-Glu/pSer motifs and plays a key role in biomineralization of bones and teeth. Constitutes the main protein kinase for extracellular proteins, generating the majority of the extracellular phosphoproteome. Mainly phosphorylates proteins within the Ser-x-Glu/pSer motif, but also displays a broader substrate specificity. Phosphorylates ERO1A, enhancing its activity which is required to maintain endoplasmic reticulum redox homeostasis and for oxidative protein folding. During endoplasmic reticulum stress, phosphorylates P4HB/PDIA1 which induces a functional switch, causing P4HB to change from an oxidoreductase to a molecular chaperone. This is critical to maintain ER proteostasis and reduce cell death under ER stress. Phosphorylation of P4HB also promotes its interaction with ERN1, leading to reduced activity of ERN1, a key sensor for the endoplasmic reticulum unfolded protein response. Required for osteoblast differentiation and mineralization. Phosphorylates casein as well as a number of proteins involved in biomineralization such as AMELX, AMTN, ENAM and SPP1/OPN. In addition to its role in biomineralization, also plays a role in lipid homeostasis, wound healing and cell migration and adhesion. The polypeptide is Extracellular serine/threonine protein kinase FAM20C (Homo sapiens (Human)).